A 424-amino-acid chain; its full sequence is UDP-N-acetylglucosamine 1-carboxyvinyltransferase (424 aa).

Lys22–Asn23 serves as a coordination point for phosphoenolpyruvate. Arg93 is a UDP-N-acetyl-alpha-D-glucosamine binding site. Cys117 serves as the catalytic Proton donor. Cys117 is subject to 2-(S-cysteinyl)pyruvic acid O-phosphothioketal. UDP-N-acetyl-alpha-D-glucosamine contacts are provided by residues Arg122 to Leu126, Lys162 to Val165, Asp307, and Ile329.

The protein belongs to the EPSP synthase family. MurA subfamily.

It is found in the cytoplasm. The catalysed reaction is phosphoenolpyruvate + UDP-N-acetyl-alpha-D-glucosamine = UDP-N-acetyl-3-O-(1-carboxyvinyl)-alpha-D-glucosamine + phosphate. It functions in the pathway cell wall biogenesis; peptidoglycan biosynthesis. Its function is as follows. Cell wall formation. Adds enolpyruvyl to UDP-N-acetylglucosamine. In Haemophilus influenzae (strain PittGG), this protein is UDP-N-acetylglucosamine 1-carboxyvinyltransferase.